Consider the following 274-residue polypeptide: tRNA (mnm(5)s(2)U34)-methyltransferase, chloroplastic (274 aa).

A chloroplast-targeting transit peptide spans 1 to 50; the sequence is MAAGFFQAEMSILSSTLARSYSLPIRKTLMTFDFRIAMQRNPCLRIRRSC. S-adenosyl-L-methionine is bound by residues N108, N110, D134, Q136, and H166.

This sequence belongs to the methyltransferase superfamily. MnmM family.

Its subcellular location is the plastid. It localises to the chloroplast. The catalysed reaction is 5-aminomethyl-2-thiouridine(34) in tRNA + S-adenosyl-L-methionine = 5-methylaminomethyl-2-thiouridine(34) in tRNA + S-adenosyl-L-homocysteine + H(+). The protein operates within tRNA modification. Involved in the biosynthesis of 5-methylaminomethyl-2-thiouridine (mnm(5)s(2)U) at the wobble position (U34) in tRNA. Catalyzes the transfer of a methyl group from S-adenosyl-L-methionine to nm(5)s(2)U34 to form mnm(5)s(2)U34. The sequence is that of tRNA (mnm(5)s(2)U34)-methyltransferase, chloroplastic from Arabidopsis thaliana (Mouse-ear cress).